Consider the following 319-residue polypeptide: Beta-ketoacyl-[acyl-carrier-protein] synthase III (319 aa).

Residues cysteine 110 and histidine 246 contribute to the active site. The interval 247–251 (QANYR) is ACP-binding. Asparagine 276 is a catalytic residue.

This sequence belongs to the thiolase-like superfamily. FabH family. In terms of assembly, homodimer.

It localises to the cytoplasm. The enzyme catalyses malonyl-[ACP] + acetyl-CoA + H(+) = 3-oxobutanoyl-[ACP] + CO2 + CoA. Its pathway is lipid metabolism; fatty acid biosynthesis. In terms of biological role, catalyzes the condensation reaction of fatty acid synthesis by the addition to an acyl acceptor of two carbons from malonyl-ACP. Catalyzes the first condensation reaction which initiates fatty acid synthesis and may therefore play a role in governing the total rate of fatty acid production. Possesses both acetoacetyl-ACP synthase and acetyl transacylase activities. Its substrate specificity determines the biosynthesis of branched-chain and/or straight-chain of fatty acids. This Lactobacillus delbrueckii subsp. bulgaricus (strain ATCC 11842 / DSM 20081 / BCRC 10696 / JCM 1002 / NBRC 13953 / NCIMB 11778 / NCTC 12712 / WDCM 00102 / Lb 14) protein is Beta-ketoacyl-[acyl-carrier-protein] synthase III.